Here is a 236-residue protein sequence, read N- to C-terminus: Sugar fermentation stimulation protein homolog (236 aa).

Belongs to the SfsA family.

In Methylobacterium nodulans (strain LMG 21967 / CNCM I-2342 / ORS 2060), this protein is Sugar fermentation stimulation protein homolog.